Here is a 433-residue protein sequence, read N- to C-terminus: UPF0761 membrane protein Sde_0901 (433 aa).

The next 6 membrane-spanning stretches (helical) occupy residues 46–66 (LFAMVPLMAVFYSMFSMFPAF), 103–123 (LSAAGAGLLVVTAYLMLTNIE), 142–162 (FLLYWAVLTIGPLLLGAGLAM), 185–205 (FFSYLPLFTTSAAFTLLFAAV), 217–237 (IGGILTAVCFELLKIGFGWVV), and 247–267 (GAFAVVPLFLLWVNLLWMIIL).

It belongs to the UPF0761 family.

The protein resides in the cell inner membrane. The protein is UPF0761 membrane protein Sde_0901 of Saccharophagus degradans (strain 2-40 / ATCC 43961 / DSM 17024).